The chain runs to 640 residues: Large subunit GTPase 1 homolog (640 aa).

The region spanning W165–P426 is the CP-type G domain. N213–D216 provides a ligand contact to GTP. The segment at A251–N341 is disordered. Composition is skewed to acidic residues over residues E253–E270, E290–D304, and E320–P331. Positions E332 to N341 are enriched in polar residues. GTP is bound by residues G375–S382 and D419–G422. The interval G602 to A640 is disordered. The segment covering P618–A640 has biased composition (basic residues).

Belongs to the TRAFAC class YlqF/YawG GTPase family. LSG1 subfamily.

It is found in the cytoplasm. The protein resides in the endoplasmic reticulum. The protein localises to the nucleus. It localises to the cajal body. It carries out the reaction GTP + H2O = GDP + phosphate + H(+). Functions as a GTPase. May act by mediating the release of NMD3 from the 60S ribosomal subunit after export into the cytoplasm during the 60S ribosomal subunit maturation. This chain is Large subunit GTPase 1 homolog, found in Danio rerio (Zebrafish).